The following is a 117-amino-acid chain: NADH-ubiquinone oxidoreductase chain 3 (117 aa).

Transmembrane regions (helical) follow at residues 5–25 (ALSS…AWVL), 57–77 (FFLL…LMPL), and 86–106 (VFTT…GLIH).

The protein belongs to the complex I subunit 3 family.

Its subcellular location is the mitochondrion membrane. It carries out the reaction a ubiquinone + NADH + 5 H(+)(in) = a ubiquinol + NAD(+) + 4 H(+)(out). In terms of biological role, core subunit of the mitochondrial membrane respiratory chain NADH dehydrogenase (Complex I) that is believed to belong to the minimal assembly required for catalysis. Complex I functions in the transfer of electrons from NADH to the respiratory chain. The immediate electron acceptor for the enzyme is believed to be ubiquinone. The protein is NADH-ubiquinone oxidoreductase chain 3 (ND3) of Lumbricus terrestris (Common earthworm).